Here is a 556-residue protein sequence, read N- to C-terminus: 2-succinyl-5-enolpyruvyl-6-hydroxy-3-cyclohexene-1-carboxylate synthase (556 aa).

The protein belongs to the TPP enzyme family. MenD subfamily. In terms of assembly, homodimer. Mg(2+) is required as a cofactor. It depends on Mn(2+) as a cofactor. The cofactor is thiamine diphosphate.

The catalysed reaction is isochorismate + 2-oxoglutarate + H(+) = 5-enolpyruvoyl-6-hydroxy-2-succinyl-cyclohex-3-ene-1-carboxylate + CO2. It functions in the pathway quinol/quinone metabolism; 1,4-dihydroxy-2-naphthoate biosynthesis; 1,4-dihydroxy-2-naphthoate from chorismate: step 2/7. The protein operates within quinol/quinone metabolism; menaquinone biosynthesis. In terms of biological role, catalyzes the thiamine diphosphate-dependent decarboxylation of 2-oxoglutarate and the subsequent addition of the resulting succinic semialdehyde-thiamine pyrophosphate anion to isochorismate to yield 2-succinyl-5-enolpyruvyl-6-hydroxy-3-cyclohexene-1-carboxylate (SEPHCHC). This Klebsiella pneumoniae subsp. pneumoniae (strain ATCC 700721 / MGH 78578) protein is 2-succinyl-5-enolpyruvyl-6-hydroxy-3-cyclohexene-1-carboxylate synthase.